The sequence spans 446 residues: Protein dyf-7 (446 aa).

Positions 1 to 24 (MNQLWRASCLQVLITFLLIHQNKA) are cleaved as a signal peptide. The ZP domain occupies 35 to 295 (DCIADSFTVV…KTCYKKVSDS (261 aa)). Cysteines 211 and 273 form a disulfide. Residues 377–397 (IPLIIMGSLASLLLFSAGAAI) form a helical membrane-spanning segment.

As to quaternary structure, monomer under reducing conditions. Homodimer under non-reducing conditions. May also form higher order oligomers. Post-translationally, proteolytically cleaved and secreted in vitro. As to expression, in the embryo, expressed in the excretory cell and, during dendrite formation, in the non-neuronal cells surrounding the sensory neurons, including hypodermal cells.

Its subcellular location is the cell membrane. It localises to the cell projection. It is found in the dendrite. The protein localises to the secreted. In terms of biological role, required for permeability of amphid and phasmid neurons to external dyes, chemotaxis to ammonium chloride, avoidance of high osmotic stimuli, male mating and dauer formation. Along with dex-1, enables neurite growth and maintenance by anchoring amphid dendritic tips during neuron cell body migration in embryonic and larval development. This chain is Protein dyf-7, found in Caenorhabditis elegans.